Consider the following 100-residue polypeptide: Omega-hexatoxin-Asp2a (100 aa).

Positions 1–23 (MKFSKLSITLAVILTQAVFVLCG) are cleaved as a signal peptide. The propeptide occupies 24–55 (MKNEDFMEKGLESNELHDAIKKPVNSGKPDTE). 3 disulfide bridges follow: cysteine 60–cysteine 73, cysteine 66–cysteine 79, and cysteine 72–cysteine 84.

The protein belongs to the neurotoxin 15 family. 02 (omega-actx) subfamily. In terms of tissue distribution, expressed by the venom gland.

It localises to the secreted. Potent inhibitor of insect, but not mammalian, voltage-gated calcium channels (Cav). The polypeptide is Omega-hexatoxin-Asp2a (Atrax sp. (strain Illawarra) (Funnel-web spider)).